We begin with the raw amino-acid sequence, 410 residues long: Peptidase T (410 aa).

Histidine 78 is a binding site for Zn(2+). Aspartate 80 is a catalytic residue. Aspartate 140 is a binding site for Zn(2+). Catalysis depends on glutamate 173, which acts as the Proton acceptor. Zn(2+)-binding residues include glutamate 174, aspartate 196, and histidine 379.

Belongs to the peptidase M20B family. The cofactor is Zn(2+).

The protein localises to the cytoplasm. The enzyme catalyses Release of the N-terminal residue from a tripeptide.. Its function is as follows. Cleaves the N-terminal amino acid of tripeptides. The chain is Peptidase T from Pectobacterium carotovorum subsp. carotovorum (strain PC1).